The sequence spans 398 residues: Serine/threonine-protein kinase 32A (398 aa).

The N-myristoyl glycine moiety is linked to residue Gly-2. One can recognise a Protein kinase domain in the interval 23–281 (FEILRAIGKG…LTDIQNFPYM (259 aa)). Residues 29 to 37 (IGKGSFGKV) and Lys-52 contribute to the ATP site. The Proton acceptor role is filled by Asp-146. Positions 379-398 (ALEQTKNNTEEEEDGQNNNL) are disordered. Positions 388–398 (EEEEDGQNNNL) are enriched in acidic residues.

Belongs to the protein kinase superfamily. Ser/Thr protein kinase family. Mg(2+) is required as a cofactor.

Its subcellular location is the cell membrane. The catalysed reaction is L-seryl-[protein] + ATP = O-phospho-L-seryl-[protein] + ADP + H(+). It carries out the reaction L-threonyl-[protein] + ATP = O-phospho-L-threonyl-[protein] + ADP + H(+). This Mus musculus (Mouse) protein is Serine/threonine-protein kinase 32A.